Consider the following 389-residue polypeptide: Alanine racemase 1 (389 aa).

Residue K41 is the Proton acceptor; specific for D-alanine of the active site. K41 carries the N6-(pyridoxal phosphate)lysine modification. Position 137 (R137) interacts with substrate. The active-site Proton acceptor; specific for L-alanine is Y266. A substrate-binding site is contributed by M313.

This sequence belongs to the alanine racemase family. Pyridoxal 5'-phosphate is required as a cofactor.

It carries out the reaction L-alanine = D-alanine. It functions in the pathway amino-acid biosynthesis; D-alanine biosynthesis; D-alanine from L-alanine: step 1/1. Its function is as follows. Catalyzes the interconversion of L-alanine and D-alanine. May also act on other amino acids. This is Alanine racemase 1 (alr1) from Bacillus subtilis (strain 168).